A 173-amino-acid polypeptide reads, in one-letter code: Globin-like host-protective antigen (173 aa).

An N-terminal signal peptide occupies residues 1 to 15 (MRFLLLAAFVAYAYA). Positions 25 to 166 (ALSALDVVPL…FNDEAQKQLA (142 aa)) constitute a Globin domain. A heme b-binding site is contributed by His-114.

It belongs to the globin family.

The protein resides in the secreted. Its subcellular location is the extracellular space. Functionally, may be a globin and may play a role in oxygen transport. This Trichostrongylus colubriformis (Black scour worm) protein is Globin-like host-protective antigen.